The following is a 317-amino-acid chain: SWI/SNF-related matrix-associated actin-dependent regulator of chromatin subfamily E member 1-related (317 aa).

Low complexity predominate over residues 1–22 (MSHGPKQPGAASAPASGKAPGQ). The tract at residues 1–71 (MSHGPKQPGA…RKKILPNGPK (71 aa)) is disordered. Residue Lys-31 forms a Glycyl lysine isopeptide (Lys-Gly) (interchain with G-Cter in SUMO2) linkage. Residues 31 to 52 (KQERGEGPRAGEKGSHEEEPVK) show a composition bias toward basic and acidic residues. Residues 53–65 (KRGWPKGKKRKKI) show a composition bias toward basic residues. A DNA-binding region (HMG box) is located at residues 70–138 (PKAPVTGYVR…QYMKELRAYQ (69 aa)). Residue Ser-160 is modified to Phosphoserine. Residues 190–257 (EEFLDQNKAR…LQQQLQAVRQ (68 aa)) are a coiled coil.

As to quaternary structure, component of a BHC histone deacetylase complex that contains HDAC1, HDAC2, HMG20B/BRAF35, KDM1A, RCOR1/CoREST and PHF21A/BHC80. The BHC complex may also contain ZMYM2, ZNF217, ZMYM3, GSE1 and GTF2I. Interacts with the BRCA2 tumor suppressor protein.

The protein localises to the nucleus. It localises to the chromosome. In terms of biological role, required for correct progression through G2 phase of the cell cycle and entry into mitosis. Required for RCOR1/CoREST mediated repression of neuronal specific gene promoters. In Bos taurus (Bovine), this protein is SWI/SNF-related matrix-associated actin-dependent regulator of chromatin subfamily E member 1-related (HMG20B).